The chain runs to 326 residues: Eukaryotic translation initiation factor 3 subunit I (326 aa).

WD repeat units follow at residues 8–47, 50–89, 145–184, 188–227, and 285–326; these read GHER…RLGT, GHQG…VIAS, MTES…KVVD, DHSA…CLKT, and GHFG…NIFE.

The protein belongs to the eIF-3 subunit I family. As to quaternary structure, component of the eukaryotic translation initiation factor 3 (eIF-3) complex. The eIF-3 complex interacts with pix.

Its subcellular location is the cytoplasm. Component of the eukaryotic translation initiation factor 3 (eIF-3) complex, which is involved in protein synthesis of a specialized repertoire of mRNAs and, together with other initiation factors, stimulates binding of mRNA and methionyl-tRNAi to the 40S ribosome. The eIF-3 complex specifically targets and initiates translation of a subset of mRNAs involved in cell proliferation. The chain is Eukaryotic translation initiation factor 3 subunit I from Drosophila sechellia (Fruit fly).